A 333-amino-acid chain; its full sequence is Ketol-acid reductoisomerase (NADP(+)) (333 aa).

The region spanning 2–182 (ANIYYDDSCD…GGGRAGILET (181 aa)) is the KARI N-terminal Rossmann domain. Residues 25–28 (YGSQ), Arg-48, Ser-51, Ser-53, and 83–86 (DTIQ) each bind NADP(+). Residue His-108 is part of the active site. Residue Gly-134 coordinates NADP(+). The KARI C-terminal knotted domain occupies 183–331 (SFREETETDL…TKLRSMMKWL (149 aa)). Mg(2+) contacts are provided by Asp-191, Glu-195, Glu-227, and Glu-231. Ser-252 is a substrate binding site.

It belongs to the ketol-acid reductoisomerase family. Requires Mg(2+) as cofactor.

The enzyme catalyses (2R)-2,3-dihydroxy-3-methylbutanoate + NADP(+) = (2S)-2-acetolactate + NADPH + H(+). It carries out the reaction (2R,3R)-2,3-dihydroxy-3-methylpentanoate + NADP(+) = (S)-2-ethyl-2-hydroxy-3-oxobutanoate + NADPH + H(+). It participates in amino-acid biosynthesis; L-isoleucine biosynthesis; L-isoleucine from 2-oxobutanoate: step 2/4. Its pathway is amino-acid biosynthesis; L-valine biosynthesis; L-valine from pyruvate: step 2/4. In terms of biological role, involved in the biosynthesis of branched-chain amino acids (BCAA). Catalyzes an alkyl-migration followed by a ketol-acid reduction of (S)-2-acetolactate (S2AL) to yield (R)-2,3-dihydroxy-isovalerate. In the isomerase reaction, S2AL is rearranged via a Mg-dependent methyl migration to produce 3-hydroxy-3-methyl-2-ketobutyrate (HMKB). In the reductase reaction, this 2-ketoacid undergoes a metal-dependent reduction by NADPH to yield (R)-2,3-dihydroxy-isovalerate. The chain is Ketol-acid reductoisomerase (NADP(+)) from Leptospira biflexa serovar Patoc (strain Patoc 1 / Ames).